We begin with the raw amino-acid sequence, 1227 residues long: Tyrosine-protein kinase receptor ver-3 (1227 aa).

The signal sequence occupies residues Met1–Ser17. The Extracellular portion of the chain corresponds to Tyr18–Ser764. An Ig-like C2-type 1 domain is found at Pro20–Cys110. An intrachain disulfide couples Cys52 to Cys110. Asn119, Asn211, Asn245, Asn255, Asn381, Asn425, and Asn528 each carry an N-linked (GlcNAc...) asparagine glycan. An Ig-like C2-type 2 domain is found at Val200 to Thr325. Cysteines 204 and 313 form a disulfide. Ig-like C2-type domains follow at residues Pro565–Asp666 and Pro673–Asn758. Intrachain disulfides connect Cys592/Cys650 and Cys696/Cys740. A glycan (N-linked (GlcNAc...) asparagine) is linked at Asn697. The helical transmembrane segment at Leu765 to Leu785 threads the bilayer. The Cytoplasmic segment spans residues Thr786–Ala1227. The 329-residue stretch at Leu847–Leu1175 folds into the Protein kinase domain. Residues Ile853–Val861 and Lys886 each bind ATP. The Proton acceptor role is filled by Asp1030. The interval Asp1194–Ala1227 is disordered. The span at Lys1214 to Ala1227 shows a compositional bias: basic and acidic residues.

It belongs to the protein kinase superfamily. Tyr protein kinase family. In terms of tissue distribution, expressed in the ALA neuron.

The protein localises to the cell membrane. It catalyses the reaction L-tyrosyl-[protein] + ATP = O-phospho-L-tyrosyl-[protein] + ADP + H(+). Functionally, receptor tyrosine kinase which may be involved, downstream of pvf-1, in the positioning of ray 1, the most anterior ray sensillum in the male tail. In Caenorhabditis elegans, this protein is Tyrosine-protein kinase receptor ver-3.